The chain runs to 429 residues: Enolase (429 aa).

Gln-162 contributes to the (2R)-2-phosphoglycerate binding site. The Proton donor role is filled by Glu-204. Residues Asp-242, Glu-289, and Asp-316 each contribute to the Mg(2+) site. The (2R)-2-phosphoglycerate site is built by Lys-341, Arg-370, Ser-371, and Lys-392. Lys-341 acts as the Proton acceptor in catalysis.

This sequence belongs to the enolase family. The cofactor is Mg(2+).

The protein resides in the cytoplasm. The protein localises to the secreted. Its subcellular location is the cell surface. It catalyses the reaction (2R)-2-phosphoglycerate = phosphoenolpyruvate + H2O. It participates in carbohydrate degradation; glycolysis; pyruvate from D-glyceraldehyde 3-phosphate: step 4/5. Catalyzes the reversible conversion of 2-phosphoglycerate (2-PG) into phosphoenolpyruvate (PEP). It is essential for the degradation of carbohydrates via glycolysis. This is Enolase from Flavobacterium psychrophilum (strain ATCC 49511 / DSM 21280 / CIP 103535 / JIP02/86).